Reading from the N-terminus, the 406-residue chain is Cysteine desulfurase (406 aa).

K226 carries the N6-(pyridoxal phosphate)lysine modification. The Cysteine persulfide intermediate role is filled by C364.

Belongs to the class-V pyridoxal-phosphate-dependent aminotransferase family. Csd subfamily. Homodimer. Interacts with SufE and the SufBCD complex composed of SufB, SufC and SufD. The interaction with SufE is required to mediate the direct transfer of the sulfur atom from the S-sulfanylcysteine. Pyridoxal 5'-phosphate serves as cofactor.

It localises to the cytoplasm. The catalysed reaction is (sulfur carrier)-H + L-cysteine = (sulfur carrier)-SH + L-alanine. It carries out the reaction L-selenocysteine + AH2 = hydrogenselenide + L-alanine + A + H(+). The protein operates within cofactor biosynthesis; iron-sulfur cluster biosynthesis. In terms of biological role, cysteine desulfurases mobilize the sulfur from L-cysteine to yield L-alanine, an essential step in sulfur metabolism for biosynthesis of a variety of sulfur-containing biomolecules. Component of the suf operon, which is activated and required under specific conditions such as oxidative stress and iron limitation. Acts as a potent selenocysteine lyase in vitro, that mobilizes selenium from L-selenocysteine. Selenocysteine lyase activity is however unsure in vivo. In Salmonella heidelberg (strain SL476), this protein is Cysteine desulfurase.